We begin with the raw amino-acid sequence, 462 residues long: Putative F-box protein At1g12855 (462 aa).

Positions 1-22 (MESREDSFISKEKKSTMKKEKQ) are enriched in basic and acidic residues. Residues 1–59 (MESREDSFISKEKKSTMKKEKQAIASQRNRRRVIKNRGNGKRLIASLSQRKRRRIPRGR) form a disordered region. Basic residues predominate over residues 28 to 40 (RNRRRVIKNRGNG). The 46-residue stretch at 65–110 (VFAPSSLPNDVVEEIFLRLPVKAIIQLKSLSKQWRSTIESRSFEER) folds into the F-box domain.

The chain is Putative F-box protein At1g12855 from Arabidopsis thaliana (Mouse-ear cress).